A 244-amino-acid chain; its full sequence is DNA polymerase sliding clamp (244 aa).

Belongs to the PCNA family. As to quaternary structure, homotrimer. The subunits circularize to form a toroid; DNA passes through its center. Replication factor C (RFC) is required to load the toroid on the DNA.

In terms of biological role, sliding clamp subunit that acts as a moving platform for DNA processing. Responsible for tethering the catalytic subunit of DNA polymerase to DNA during high-speed replication. In conjunction with replication factor C (RFC) stimulates DNA synthesis by PolB, relieving inhibition by replication protein A (RPA). The chain is DNA polymerase sliding clamp from Methanothermobacter thermautotrophicus (strain ATCC 29096 / DSM 1053 / JCM 10044 / NBRC 100330 / Delta H) (Methanobacterium thermoautotrophicum).